The sequence spans 374 residues: LIM domain-binding protein 1-A (374 aa).

Disordered regions lie at residues 1 to 24, 249 to 297, and 322 to 374; these read MLDRDVGPTPMYPPSYMEPGIGRH, PPAE…ALSS, and TRLE…QSSQ. Over residues 267-297 the composition is skewed to low complexity; sequence SGGSTMSSGGGNNNNSNSKKKSPASSFALSS. An LIM interaction domain (LID) domain is found at 299-338; it reads DVMVVGEPTLMGGEFGDEDERLITRLENTQFDAANGIDDE. Polar residues predominate over residues 341–374; that stretch reads FNSSPTMGTNSPWNSKAPSSQQGKNDNPSSQSSQ.

Belongs to the LDB family. In terms of tissue distribution, expressed ubiquitously in the embryo and adult.

Its subcellular location is the nucleus. Its function is as follows. Binds to the LIM domain of a wide variety of LIM domain-containing transcription factors. In Danio rerio (Zebrafish), this protein is LIM domain-binding protein 1-A (ldb1a).